The chain runs to 387 residues: MEDDAPVIYGLEFQARALTPQTAETDAIRFLVGTQSLKYDNQIHIIDFDDENNIINKNVLLHQAGEIWHISASPADRGVLTTCYNRTSDSKVLTCAAVWRMPKELESGSHESPDDSSSTAQTLELLCHLDNTAHGNMACVVWEPMGDGKKIISLADNHILLWDLQESSSQAVLASSASLEGKGQLKFTSGRWSPHHNCTQVATANDTTLRGWDTRSMSQIYCIENAHGQLVRDLDFNPNKQYYLASCGDDCKVKFWDTRNVTEPVKTLEEHSHWVWNVRYNHSHDQLVLTGSSDSRVILSNMVSISSEPFGHLVDDDDISDQEDHRSEEKSKEPLQDNVIATYEEHEDSVYAVDWSSADPWLFASLSYDGRLVINRVPRALKYHILL.

Position 1 is an N-acetylmethionine (methionine 1). 6 WD repeats span residues 4 to 48, 55 to 101, 124 to 164, 172 to 214, 219 to 258, and 263 to 302; these read DAPV…IIDF, INKN…VWRM, ELLC…LWDL, VLAS…GWDT, QIYC…FWDT, and EPVK…LSNM. Positions 310–335 are disordered; the sequence is FGHLVDDDDISDQEDHRSEEKSKEPL. A Phosphoserine modification is found at serine 320. Basic and acidic residues predominate over residues 322–335; sequence QEDHRSEEKSKEPL. Residues 338 to 379 form a WD 7 repeat; the sequence is NVIATYEEHEDSVYAVDWSSADPWLFASLSYDGRLVINRVPR.

The protein belongs to the WD repeat EIPR1 family. Interacts with two multisubunit tethering complexes: EARP composed of VPS50, VPS51, VPS52 and VPS53 subunits and GARP complex composed of VPS51, VPS52, VPS53 and VPS54 subunits. Interacts with SNAP29.

Its subcellular location is the golgi apparatus. The protein resides in the trans-Golgi network. Its function is as follows. Acts as a component of endosomal retrieval machinery that is involved in protein transport from early endosomes to either recycling endosomes or the trans-Golgi network. Mediates the recruitment of Golgi-associated retrograde protein (GARP) complex to the trans-Golgi network and controls early endosome-to-Golgi transport of internalized protein. Promotes the recycling of internalized transferrin receptor (TFRC) to the plasma membrane through interaction with endosome-associated recycling protein (EARP) complex. Controls proper insulin distribution and secretion, and retention of cargo in mature dense core vesicles. Required for the stability of the endosome-associated retrograde protein (EARP) complex subunits and for proper localization and association of EARP with membranes. This Homo sapiens (Human) protein is EARP and GARP complex-interacting protein 1.